The following is a 432-amino-acid chain: 3-phosphoshikimate 1-carboxyvinyltransferase (432 aa).

Residues Lys23, Ser24, and Arg28 each coordinate 3-phosphoshikimate. Lys23 is a phosphoenolpyruvate binding site. Positions 95 and 123 each coordinate phosphoenolpyruvate. 3-phosphoshikimate contacts are provided by Ser167, Gln169, Asp317, and Lys344. Gln169 serves as a coordination point for phosphoenolpyruvate. The active-site Proton acceptor is the Asp317. Residues Arg348 and Arg390 each contribute to the phosphoenolpyruvate site.

Belongs to the EPSP synthase family. Monomer.

The protein localises to the cytoplasm. The enzyme catalyses 3-phosphoshikimate + phosphoenolpyruvate = 5-O-(1-carboxyvinyl)-3-phosphoshikimate + phosphate. It functions in the pathway metabolic intermediate biosynthesis; chorismate biosynthesis; chorismate from D-erythrose 4-phosphate and phosphoenolpyruvate: step 6/7. Functionally, catalyzes the transfer of the enolpyruvyl moiety of phosphoenolpyruvate (PEP) to the 5-hydroxyl of shikimate-3-phosphate (S3P) to produce enolpyruvyl shikimate-3-phosphate and inorganic phosphate. This chain is 3-phosphoshikimate 1-carboxyvinyltransferase, found in Staphylococcus aureus (strain Newman).